The following is a 193-amino-acid chain: RNA polymerase sigma-H factor (193 aa).

The Polymerase core binding signature appears at 49–62 (DVAQEAFIKAYRAL). The H-T-H motif DNA-binding region spans 157–176 (YEDIATVMQCPVGTVRSRIF).

This sequence belongs to the sigma-70 factor family. ECF subfamily.

In terms of biological role, sigma factors are initiation factors that promote the attachment of RNA polymerase to specific initiation sites and are then released. This sigma factor regulates genes such as algD, involved in alginate biosynthesis. In Pseudomonas aeruginosa (strain ATCC 15692 / DSM 22644 / CIP 104116 / JCM 14847 / LMG 12228 / 1C / PRS 101 / PAO1), this protein is RNA polymerase sigma-H factor (algU).